Here is a 267-residue protein sequence, read N- to C-terminus: Thymidylate synthase (267 aa).

DUMP is bound at residue R24. H54 contacts (6R)-5,10-methylene-5,6,7,8-tetrahydrofolate. 129–130 (RR) contacts dUMP. Residue C149 is the Nucleophile of the active site. DUMP is bound by residues 169 to 172 (RSAD), N180, and 210 to 212 (HVY). Residue D172 participates in (6R)-5,10-methylene-5,6,7,8-tetrahydrofolate binding. A (6R)-5,10-methylene-5,6,7,8-tetrahydrofolate-binding site is contributed by A266.

The protein belongs to the thymidylate synthase family. Bacterial-type ThyA subfamily. In terms of assembly, homodimer.

The protein localises to the cytoplasm. The catalysed reaction is dUMP + (6R)-5,10-methylene-5,6,7,8-tetrahydrofolate = 7,8-dihydrofolate + dTMP. Its pathway is pyrimidine metabolism; dTTP biosynthesis. In terms of biological role, catalyzes the reductive methylation of 2'-deoxyuridine-5'-monophosphate (dUMP) to 2'-deoxythymidine-5'-monophosphate (dTMP) while utilizing 5,10-methylenetetrahydrofolate (mTHF) as the methyl donor and reductant in the reaction, yielding dihydrofolate (DHF) as a by-product. This enzymatic reaction provides an intracellular de novo source of dTMP, an essential precursor for DNA biosynthesis. The protein is Thymidylate synthase of Paenarthrobacter aurescens (strain TC1).